The following is an 866-amino-acid chain: Phospholipase D gamma 3 (866 aa).

The 140-residue stretch at proline 31–phenylalanine 170 folds into the C2 domain. Ca(2+) is bound at residue aspartate 232. A PLD phosphodiesterase 1 domain is found at threonine 371–arginine 406. Active-site residues include histidine 376, lysine 378, and aspartate 383. Histidine 376 lines the a 1,2-diacyl-sn-glycero-3-phosphate pocket. Residues histidine 412 and histidine 444 each coordinate Ca(2+). Glutamine 572 serves as a coordination point for a 1,2-diacyl-sn-glycero-3-phosphate. A Phosphoserine modification is found at serine 692. The PLD phosphodiesterase 2 domain occupies phenylalanine 712 to serine 739. Active-site residues include histidine 717, lysine 719, and aspartate 724. Position 717 (histidine 717) interacts with a 1,2-diacyl-sn-glycero-3-phosphate. Glutamate 780 contacts Ca(2+).

It belongs to the phospholipase D family. C2-PLD subfamily. The cofactor is Ca(2+). In terms of tissue distribution, highly expressed in inflorescences and old leaves, moderately in stems, roots, siliques and young leaves and low in flowers.

The protein localises to the cytoplasm. It localises to the membrane. It carries out the reaction a 1,2-diacyl-sn-glycero-3-phosphocholine + H2O = a 1,2-diacyl-sn-glycero-3-phosphate + choline + H(+). Its activity is regulated as follows. Inhibited by neomycin. Functionally, hydrolyzes glycerol-phospholipids at the terminal phosphodiesteric bond to generate phosphatidic acids (PA). Plays an important role in various cellular processes, including phytohormone action, vesicular trafficking, secretion, cytoskeletal arrangement, meiosis, tumor promotion, pathogenesis, membrane deterioration and senescence. Can use phosphatidylserine but prefers ethanolamine-containing lipids as substrates. The polypeptide is Phospholipase D gamma 3 (Arabidopsis thaliana (Mouse-ear cress)).